A 419-amino-acid chain; its full sequence is UDP-N-acetylglucosamine 1-carboxyvinyltransferase (419 aa).

Residue 22–23 (KN) participates in phosphoenolpyruvate binding. A UDP-N-acetyl-alpha-D-glucosamine-binding site is contributed by arginine 91. Cysteine 115 serves as the catalytic Proton donor. Position 115 is a 2-(S-cysteinyl)pyruvic acid O-phosphothioketal (cysteine 115). UDP-N-acetyl-alpha-D-glucosamine-binding positions include 120–124 (RPVDL), 160–163 (KVSV), aspartate 305, and valine 327.

This sequence belongs to the EPSP synthase family. MurA subfamily.

The protein resides in the cytoplasm. The enzyme catalyses phosphoenolpyruvate + UDP-N-acetyl-alpha-D-glucosamine = UDP-N-acetyl-3-O-(1-carboxyvinyl)-alpha-D-glucosamine + phosphate. Its pathway is cell wall biogenesis; peptidoglycan biosynthesis. Its function is as follows. Cell wall formation. Adds enolpyruvyl to UDP-N-acetylglucosamine. This Salmonella arizonae (strain ATCC BAA-731 / CDC346-86 / RSK2980) protein is UDP-N-acetylglucosamine 1-carboxyvinyltransferase.